The sequence spans 586 residues: CTP synthase 2 (586 aa).

The region spanning 300 to 554 is the Glutamine amidotransferase type-1 domain; it reads SIALVGKYTK…LAATGTLNTH (255 aa). Catalysis depends on for GATase activity residues cysteine 399, histidine 526, and glutamate 528. Serine 568, serine 571, and serine 574 each carry phosphoserine.

The protein belongs to the CTP synthase family.

It carries out the reaction UTP + L-glutamine + ATP + H2O = CTP + L-glutamate + ADP + phosphate + 2 H(+). It participates in pyrimidine metabolism; CTP biosynthesis via de novo pathway; CTP from UDP: step 2/2. In terms of biological role, catalyzes the ATP-dependent amination of UTP to CTP with either L-glutamine or ammonia as the source of nitrogen. Constitutes the rate-limiting enzyme in the synthesis of cytosine nucleotides. In Rattus norvegicus (Rat), this protein is CTP synthase 2 (Ctps2).